The following is a 244-amino-acid chain: MHSQPYLLSPAPNNTPFPPAEHALREPNGLLAIGGDLTPQRLLAAYRSGIFPWFTEGQPPLWWSPDPRTVFHSDSIHLSRRFRRSLRTSTWRVRADTMFAAVIDACASTPRRGQDGTWITANMREAYLTLHQHGYAHSVEVFDGTMLVGGIYGVAIGRMFFGESMFSTHNGASKIALASLAYFLHTHSVPLIDAQVENQHLLNLGAERWPRRDFLTYVRRLITQTELPACWSVLFGEKLSRDLV.

Positions 1–22 are disordered; the sequence is MHSQPYLLSPAPNNTPFPPAEH.

The protein belongs to the L/F-transferase family.

It is found in the cytoplasm. The catalysed reaction is N-terminal L-lysyl-[protein] + L-leucyl-tRNA(Leu) = N-terminal L-leucyl-L-lysyl-[protein] + tRNA(Leu) + H(+). The enzyme catalyses N-terminal L-arginyl-[protein] + L-leucyl-tRNA(Leu) = N-terminal L-leucyl-L-arginyl-[protein] + tRNA(Leu) + H(+). It carries out the reaction L-phenylalanyl-tRNA(Phe) + an N-terminal L-alpha-aminoacyl-[protein] = an N-terminal L-phenylalanyl-L-alpha-aminoacyl-[protein] + tRNA(Phe). In terms of biological role, functions in the N-end rule pathway of protein degradation where it conjugates Leu, Phe and, less efficiently, Met from aminoacyl-tRNAs to the N-termini of proteins containing an N-terminal arginine or lysine. The polypeptide is Leucyl/phenylalanyl-tRNA--protein transferase (Xylella fastidiosa (strain M12)).